A 372-amino-acid chain; its full sequence is Protein-glutamate methylesterase/protein-glutamine glutaminase (372 aa).

The 119-residue stretch at 5–123 (RVLIVDDSAL…SANLTTVSET (119 aa)) folds into the Response regulatory domain. Aspartate 56 carries the 4-aspartylphosphate modification. The span at 140-151 (GTRSTDTTNSFS) shows a compositional bias: polar residues. Positions 140–177 (GTRSTDTTNSFSEPFKSTIPKPMTAAEPQKEEKPTPQR) are disordered. The span at 167 to 177 (PQKEEKPTPQR) shows a compositional bias: basic and acidic residues. The CheB-type methylesterase domain maps to 178 to 364 (EHGNIQIIAI…VSLDNMAAAI (187 aa)). Catalysis depends on residues serine 190, histidine 217, and aspartate 313.

Belongs to the CheB family. Phosphorylated by CheA. Phosphorylation of the N-terminal regulatory domain activates the methylesterase activity.

Its subcellular location is the cytoplasm. It catalyses the reaction [protein]-L-glutamate 5-O-methyl ester + H2O = L-glutamyl-[protein] + methanol + H(+). The enzyme catalyses L-glutaminyl-[protein] + H2O = L-glutamyl-[protein] + NH4(+). Functionally, involved in chemotaxis. Part of a chemotaxis signal transduction system that modulates chemotaxis in response to various stimuli. Catalyzes the demethylation of specific methylglutamate residues introduced into the chemoreceptors (methyl-accepting chemotaxis proteins or MCP) by CheR. Also mediates the irreversible deamidation of specific glutamine residues to glutamic acid. The protein is Protein-glutamate methylesterase/protein-glutamine glutaminase of Treponema denticola (strain ATCC 35405 / DSM 14222 / CIP 103919 / JCM 8153 / KCTC 15104).